Here is a 421-residue protein sequence, read N- to C-terminus: BEN domain-containing protein 5 (421 aa).

Lysine 133 is subject to N6-acetyllysine. Residues 180–243 adopt a coiled-coil conformation; that stretch reads RALYEELLRN…LNRRLQDVLL (64 aa). Lysine 258 is covalently cross-linked (Glycyl lysine isopeptide (Lys-Gly) (interchain with G-Cter in SUMO2)). The region spanning 302–408 is the BEN domain; sequence GSGIWVDEEK…EKIMDINKSC (107 aa).

Acts as a transcriptional repressor. This is BEN domain-containing protein 5 (Bend5) from Mus musculus (Mouse).